The following is a 117-amino-acid chain: uncharacterized protein (117 aa).

A run of 3 helical transmembrane segments spans residues 32-52 (VSSS…VTVV), 56-76 (VGVA…VTLL), and 87-107 (LSWC…SFFF).

Its subcellular location is the membrane. This is an uncharacterized protein from Saccharomyces cerevisiae (strain ATCC 204508 / S288c) (Baker's yeast).